The sequence spans 208 residues: Uracil phosphoribosyltransferase (208 aa).

5-phospho-alpha-D-ribose 1-diphosphate contacts are provided by residues R78, R103, and 130-138 (DPMLATGGS). Uracil-binding positions include I193 and 198-200 (GDA). A 5-phospho-alpha-D-ribose 1-diphosphate-binding site is contributed by D199.

Belongs to the UPRTase family. Requires Mg(2+) as cofactor.

It carries out the reaction UMP + diphosphate = 5-phospho-alpha-D-ribose 1-diphosphate + uracil. The protein operates within pyrimidine metabolism; UMP biosynthesis via salvage pathway; UMP from uracil: step 1/1. With respect to regulation, allosterically activated by GTP. In terms of biological role, catalyzes the conversion of uracil and 5-phospho-alpha-D-ribose 1-diphosphate (PRPP) to UMP and diphosphate. In Roseiflexus castenholzii (strain DSM 13941 / HLO8), this protein is Uracil phosphoribosyltransferase.